A 336-amino-acid polypeptide reads, in one-letter code: Biotin synthase (336 aa).

In terms of domain architecture, Radical SAM core spans 54-281 (NAIQLSTLLS…KAMVRLSAGR (228 aa)). [4Fe-4S] cluster-binding residues include Cys-69, Cys-73, and Cys-76. [2Fe-2S] cluster is bound by residues Cys-113, Cys-144, Cys-204, and Arg-276.

The protein belongs to the radical SAM superfamily. Biotin synthase family. In terms of assembly, homodimer. It depends on [4Fe-4S] cluster as a cofactor. [2Fe-2S] cluster is required as a cofactor.

It carries out the reaction (4R,5S)-dethiobiotin + (sulfur carrier)-SH + 2 reduced [2Fe-2S]-[ferredoxin] + 2 S-adenosyl-L-methionine = (sulfur carrier)-H + biotin + 2 5'-deoxyadenosine + 2 L-methionine + 2 oxidized [2Fe-2S]-[ferredoxin]. It functions in the pathway cofactor biosynthesis; biotin biosynthesis; biotin from 7,8-diaminononanoate: step 2/2. Functionally, catalyzes the conversion of dethiobiotin (DTB) to biotin by the insertion of a sulfur atom into dethiobiotin via a radical-based mechanism. This chain is Biotin synthase, found in Burkholderia thailandensis (strain ATCC 700388 / DSM 13276 / CCUG 48851 / CIP 106301 / E264).